The chain runs to 254 residues: MAKKIEYKDLLDAGVHFGHLTRKWNPKMAPYIFMEKNGIHLIDLNKTLVCLDEANAALKTIVRSGRKVLFVATKKQAQEVVTAEAKRLKMPYATERWLGGMLTNFATVRKSLKKMSSMEKMMKDEAFSSLNKKERLVLSREKEKLEKVLGGIADLTRLPAAIFVVDVKKEHIAIAEAKKLGIPVFAIVDTNSDPTIVDFPIPANDDAFKSISILTQAIGQGIEDALSERKREKDDAKLKEDEESKKASDKAEIQ.

The segment at 225–254 is disordered; sequence ALSERKREKDDAKLKEDEESKKASDKAEIQ. The span at 226-254 shows a compositional bias: basic and acidic residues; it reads LSERKREKDDAKLKEDEESKKASDKAEIQ.

It belongs to the universal ribosomal protein uS2 family.

The chain is Small ribosomal subunit protein uS2 from Cytophaga hutchinsonii (strain ATCC 33406 / DSM 1761 / CIP 103989 / NBRC 15051 / NCIMB 9469 / D465).